The sequence spans 355 residues: Protein RecA (355 aa).

72–79 contacts ATP; sequence GPESSGKT.

This sequence belongs to the RecA family.

Its subcellular location is the cytoplasm. Functionally, can catalyze the hydrolysis of ATP in the presence of single-stranded DNA, the ATP-dependent uptake of single-stranded DNA by duplex DNA, and the ATP-dependent hybridization of homologous single-stranded DNAs. It interacts with LexA causing its activation and leading to its autocatalytic cleavage. The sequence is that of Protein RecA from Wolbachia sp. subsp. Drosophila simulans (strain wRi).